Reading from the N-terminus, the 109-residue chain is Thiosulfate sulfurtransferase GlpE (109 aa).

The Rhodanese domain maps to 17 to 105 (AQGQALLLDI…WQRAYPEEVA (89 aa)). The active-site Cysteine persulfide intermediate is Cys65.

This sequence belongs to the GlpE family.

It localises to the cytoplasm. The enzyme catalyses thiosulfate + hydrogen cyanide = thiocyanate + sulfite + 2 H(+). It carries out the reaction thiosulfate + [thioredoxin]-dithiol = [thioredoxin]-disulfide + hydrogen sulfide + sulfite + 2 H(+). In terms of biological role, transferase that catalyzes the transfer of sulfur from thiosulfate to thiophilic acceptors such as cyanide or dithiols. May function in a CysM-independent thiosulfate assimilation pathway by catalyzing the conversion of thiosulfate to sulfite, which can then be used for L-cysteine biosynthesis. The polypeptide is Thiosulfate sulfurtransferase GlpE (Edwardsiella ictaluri (strain 93-146)).